The sequence spans 603 residues: Elongation factor 4 (603 aa).

The 183-residue stretch at 7 to 189 (SRIRNFSIIA…SIVQLVPPPQ (183 aa)) folds into the tr-type G domain. Residues 19–24 (DHGKST) and 136–139 (NKID) contribute to the GTP site.

It belongs to the TRAFAC class translation factor GTPase superfamily. Classic translation factor GTPase family. LepA subfamily.

It localises to the cell inner membrane. The catalysed reaction is GTP + H2O = GDP + phosphate + H(+). In terms of biological role, required for accurate and efficient protein synthesis under certain stress conditions. May act as a fidelity factor of the translation reaction, by catalyzing a one-codon backward translocation of tRNAs on improperly translocated ribosomes. Back-translocation proceeds from a post-translocation (POST) complex to a pre-translocation (PRE) complex, thus giving elongation factor G a second chance to translocate the tRNAs correctly. Binds to ribosomes in a GTP-dependent manner. This chain is Elongation factor 4, found in Microcystis aeruginosa (strain NIES-843 / IAM M-2473).